The primary structure comprises 256 residues: Pimeloyl-[acyl-carrier protein] methyl ester esterase (256 aa).

Positions 15-242 constitute an AB hydrolase-1 domain; that stretch reads HLVLLHGWGL…AAHAPFISHP (228 aa). Substrate contacts are provided by residues Trp22, 82–83, and 143–147; these read SL and FLALQ. Catalysis depends on Ser82, which acts as the Nucleophile. Residues Asp207 and His235 contribute to the active site. His235 provides a ligand contact to substrate.

It belongs to the AB hydrolase superfamily. Carboxylesterase BioH family. In terms of assembly, monomer.

Its subcellular location is the cytoplasm. The catalysed reaction is 6-carboxyhexanoyl-[ACP] methyl ester + H2O = 6-carboxyhexanoyl-[ACP] + methanol + H(+). Its pathway is cofactor biosynthesis; biotin biosynthesis. Functionally, the physiological role of BioH is to remove the methyl group introduced by BioC when the pimeloyl moiety is complete. It allows to synthesize pimeloyl-ACP via the fatty acid synthetic pathway through the hydrolysis of the ester bonds of pimeloyl-ACP esters. The chain is Pimeloyl-[acyl-carrier protein] methyl ester esterase from Shigella boydii serotype 4 (strain Sb227).